The following is a 353-amino-acid chain: 6-phosphogluconolactonase (353 aa).

This sequence belongs to the cycloisomerase 2 family.

It localises to the cytoplasm. The catalysed reaction is 6-phospho-D-glucono-1,5-lactone + H2O = 6-phospho-D-gluconate + H(+). It participates in carbohydrate degradation; pentose phosphate pathway; D-ribulose 5-phosphate from D-glucose 6-phosphate (oxidative stage): step 2/3. Its function is as follows. Carboxylic ester hydrolase that may be involved in ulvan degradation. Ulvan is the main polysaccharide component of the Ulvales (green seaweed) cell wall. It is composed of disaccharide building blocks comprising 3-sulfated rhamnose (Rha3S) linked to D-glucuronic acid (GlcA), L-iduronic acid (IduA), or D-xylose (Xyl). Catalyzes the hydrolysis of 6-phosphogluconolactone to 6-phosphogluconate. The protein is 6-phosphogluconolactonase (pgl) of Formosa agariphila (strain DSM 15362 / KCTC 12365 / LMG 23005 / KMM 3901 / M-2Alg 35-1).